The primary structure comprises 1134 residues: Ubinuclein-1 (1134 aa).

Disordered stretches follow at residues 1–38 (MSEP…HQDC) and 78–98 (LQPG…EKER). The interval 1-166 (MSEPHRVQFT…YGGFYINSGT (166 aa)) is sufficient for interaction with HIRA. Composition is skewed to basic and acidic residues over residues 25–38 (RKEE…HQDC) and 81–98 (GDKK…EKER). The residue at position 166 (threonine 166) is a Phosphothreonine. The disordered stretch occupies residues 171–220 (QASESEDDFIKEKKKKSPKKRKLKEGGEKIKKKKKDDTYDKEKKSKKSKF). 2 positions are modified to phosphoserine: serine 173 and serine 175. Residues 182-193 (EKKKKSPKKRKL) are compositionally biased toward basic residues. The segment covering 194-213 (KEGGEKIKKKKKDDTYDKEK) has biased composition (basic and acidic residues). Lysine 222 is subject to N6-acetyllysine. A compositionally biased stretch (basic and acidic residues) spans 253–268 (QKEKEAQKKREEEHKP). Disordered regions lie at residues 253–282 (QKEK…LREL), 321–358 (SESP…EGLP), 480–504 (EEEK…KGGR), and 594–660 (PSKI…LEDS). Phosphoserine occurs at positions 323, 336, 338, and 493. Residues 479-542 (LEEEKDKEQR…SQDLERNNKA (64 aa)) are a coiled coil. 2 stretches are compositionally biased toward basic and acidic residues: residues 480–493 (EEEK…RICS) and 598–610 (KVKE…DKKV). Serine 660 and serine 677 each carry phosphoserine. 2 disordered regions span residues 712–836 (TEEK…SPTQ) and 852–986 (QGFH…GVAK). Composition is skewed to low complexity over residues 792 to 804 (GPQV…GPQV) and 856 to 891 (PSAP…KPHS). Residues 892 to 905 (VSSAGSSYKNNPFA) are compositionally biased toward polar residues. Residues 906 to 932 (SSISKHGVSSGSSSSGGTPVQSSVSGS) are compositionally biased toward low complexity. Over residues 941–950 (SVGQATSRPV) the composition is skewed to polar residues. Over residues 973–982 (PNGDSSGGTQ) the composition is skewed to gly residues. At serine 1025 the chain carries Phosphoserine. Residues 1093 to 1108 (GLHSSPPHAAPLPHAA) are compositionally biased toward low complexity. The interval 1093-1134 (GLHSSPPHAAPLPHAAVPTHIPQSLPGASQLHGKGPAVPRKL) is disordered.

This sequence belongs to the ubinuclein family. As to quaternary structure, component of a complex that includes at least ASF1A, CABIN1, HIRA, histone H3.3 and UBN1. Interacts with HIRA (via WD repeat domain); the interaction is direct. Interacts with ASF1A, CEBPA, TJP1, TJP2 and TJP3. (Microbial infection) Interacts with Epstein-Barr virus BZLF1. As to expression, ubiquitous. Also expressed in numerous tumors and cancer cell lines.

The protein resides in the nucleus. The protein localises to the nucleoplasm. It is found in the PML body. Its subcellular location is the cell junction. It localises to the tight junction. Functionally, acts as a novel regulator of senescence. Involved in the formation of senescence-associated heterochromatin foci (SAHF), which represses expression of proliferation-promoting genes. Binds to proliferation-promoting genes. May be required for replication-independent chromatin assembly. In Homo sapiens (Human), this protein is Ubinuclein-1 (UBN1).